The chain runs to 898 residues: MAASVENRRFTHHEPAVNGLVRTFKPVPNSHRSDSPDLGRQIPSSPKKQVATGEDSSSEDENENDYKELIQKGNGELEPSILDPRDEATADNWVERNATMVRLTGKHPFNSEAPLTRLMHHGFITPAPLHYVRNHGPVPKARWEDWSVEVCGLVKRPARFTMDRLVTEFRSREFPVTLVCAGNRRKEQNMVKKTIGFNWGAAGVSTSVWRGVPLRDVLKRCGIFSRGRGAFNVCFEGAEDLPGGGGSKYGTSVKYEMAMDPARDIILGYMQNGERLSPDHGFPVRMIIPGFIGGRMVKWLKRIIVTTKESDNYYHYNDNRVLPSHVDADVAKAEAWWYKPEHIINELNINSVITTPCHEEILPINSWTTQRPYTLRGYAYSGGGRKVTRVEITMNGGEKWRVCALDHPEKPNKYGKYWCWCFWSLEVEVLDLLGAKEIAVRAWDEAHNTQPEKLIWNVMGMMNNCWFRVKTNVCKAHMGEIGIAFEHPTVPGNESGGWMAREKNLETSSDANQSLKKSVSSPFMNTSSKMFSMSEVKKHNSAESAWIIVHGHIYDCTHFLKDHPGGADSILINAGTDCTEEFDAIHSDKAKKMLEDYRIGELITTGYVSDSPNSTVHGASNTSHLAPIKEIAPLRNVALIPGAKIPTKLVYKKSLSHDVRLFRLALPSDDQVLGLPVGKHVFLCATIDDKLCMRAYTPTSTIDEVGYLDLVVKIYFKNSNPRFPNGGLMSQHLDSLPIGSVLHVKGPLGHVEYTGRGNFLVHGEPKFAKRLAMVAGGTGITPIYQVIQAILKDPEDETEMFVVYANRTEDDILLREELDDWAKKHEKLKVWYVVKESKREGWEYSVGYIRESILREHIPEGSDDVLALACGAPSMIEEAVRLNLEKMNYDTKNSLIIF.

Basic and acidic residues predominate over residues 1–15 (MAASVENRRFTHHEP). Positions 1 to 65 (MAASVENRRF…SSSEDENEND (65 aa)) are disordered. Mo-molybdopterin is bound at residue C180. The Cytochrome b5 heme-binding domain occupies 528-603 (SKMFSMSEVK…LEDYRIGELI (76 aa)). Heme is bound by residues H563 and H586. Residues 642–754 (GAKIPTKLVY…KGPLGHVEYT (113 aa)) enclose the FAD-binding FR-type domain. FAD is bound by residues 694 to 697 (RAYT), 711 to 715 (VVKIY), F716, F723, 728 to 730 (LMS), and T781.

Belongs to the nitrate reductase family. In terms of assembly, homodimer. FAD serves as cofactor. The cofactor is heme. It depends on Mo-molybdopterin as a cofactor.

It catalyses the reaction nitrite + NAD(+) + H2O = nitrate + NADH + H(+). It carries out the reaction nitrite + NADP(+) + H2O = nitrate + NADPH + H(+). Functionally, nitrate reductase is a key enzyme involved in the first step of nitrate assimilation in plants, fungi and bacteria. In Betula pendula (European white birch), this protein is Nitrate reductase [NAD(P)H] (NIA1).